A 567-amino-acid polypeptide reads, in one-letter code: Cytochrome P450 monooxygenase 69 (567 aa).

The helical transmembrane segment at 7-24 threads the bilayer; it reads ELAALTVVLLATGVLFYA. N25, N81, N223, and N279 each carry an N-linked (GlcNAc...) asparagine glycan. C475 is a binding site for heme.

The protein belongs to the cytochrome P450 family. It depends on heme as a cofactor.

It is found in the membrane. Its pathway is secondary metabolite biosynthesis. Its function is as follows. Cytochrome P450 monooxygenase that is able to use 4-ethoxybenzoic acid as a substrate for oxidation. The sequence is that of Cytochrome P450 monooxygenase 69 from Postia placenta (strain ATCC 44394 / Madison 698-R) (Brown rot fungus).